Reading from the N-terminus, the 465-residue chain is Protein hedgehog (465 aa).

Residue Cys-79 is the site of N-palmitoyl cysteine attachment. Positions 143, 144, 149, 179, 180, 183, and 185 each coordinate Ca(2+). A lipid anchor (Cholesterol glycine ester) is attached at Gly-251.

This sequence belongs to the hedgehog family. As to quaternary structure, interacts with shf. The C-terminal part of the hedgehog protein precursor displays an autoproteolysis activity that results in the cleavage of the full-length protein into two parts (N-product and C-product). In addition, the C-terminal part displays a cholesterol transferase activity that results by the covalent attachment of a cholesterol moiety to the C-terminal of the newly generated N-product. The N-product is the active species in both local and long-range signaling, whereas the C-product has no signaling activity. In terms of processing, cholesterylation is required for N-product targeting to lipid rafts and multimerization. Post-translationally, N-palmitoylation by Rasp of the hedgehog N-product, within the secretory pathway, is required for the embryonic and larval patterning activities of the hedgehog signal.

The protein resides in the nucleus. It localises to the cytoplasm. Its subcellular location is the cell membrane. It catalyses the reaction glycyl-L-cysteinyl-[protein] + cholesterol + H(+) = [protein]-C-terminal glycyl cholesterol ester + N-terminal L-cysteinyl-[protein]. Its function is as follows. The C-terminal part of the hedgehog protein precursor displays an autoproteolysis activity that results in the cleavage of the full-length protein into two parts (N-product and C-product). In addition, the C-terminal part displays a cholesterol transferase activity that results by the covalent attachment of a cholesterol moiety to the C-terminal of the newly generated N-product. Once cleaved, the C-product has no signaling activity and diffuses from the cell. The dually lipidated hedgehog protein N-product is a morphogen which is essential for a variety of patterning events during development. Establishes the anterior-posterior axis of the embryonic segments and patterns the larval imaginal disks. Binds to the patched (ptc) receptor, which functions in association with smoothened (smo), to activate the transcription of target genes wingless (wg), decapentaplegic (dpp) and ptc. In the absence of hh, ptc represses the constitutive signaling activity of smo through fused (fu). Essential component of a signaling pathway which regulates the Duox-dependent gut immune response to bacterial uracil; required to activate Cad99C-dependent endosome formation, norpA-dependent Ca2+ mobilization and p38 MAPK, which are essential steps in the Duox-dependent production of reactive oxygen species (ROS) in response to intestinal bacterial infection. During photoreceptor differentiation, it up-regulates transcription of Ubr3, which in turn promotes the hh-signaling pathway by mediating the ubiquitination and degradation of cos. In Drosophila erecta (Fruit fly), this protein is Protein hedgehog.